Reading from the N-terminus, the 450-residue chain is MTVHSAESNGSNRIVIIIVGLGIAGLSAAIECHGKGHQVMVFEKYSDLKRTEGDGISIGSNGARVSAKWGDGTFHELIRPLEYQTNKAKVSDYTGYSYGTFELHGYNEGRGYTVNRGQLVYAMHEYARSLGIPIFLNSEVTGYWETEDEAGVVVDGKRISADCVVCAEGIHSSGRLIITGQKMELKETGYAASRGYLDACVTSQDSKLNWILGEEEAEAEDCVYGWLGPGVHFGITTKKRENELFWYCSHKDACTPSKDIDGTINQILHCMEGWAARDQLETVMRKAKKGRFVSETLAIRTPLATWLSPKRRMIVIGDAAHAALPSSGQGGTQAIEDAATLAICLELAGKKDVALALSVTEKLRHQRAQIVQQGGLAVLQFVMNHVDFEALRTDPTMVKPPHPAWILDHDCQEYAYREFVKAAEAIQDGEEYVPHNIPRDGKYSMEYNSQ.

A helical membrane pass occupies residues 14 to 34; it reads IVIIIVGLGIAGLSAAIECHG. FAD is bound by residues Glu43 and Arg116. Arg194 is a catalytic residue. FAD-binding residues include Asp318 and Gly331.

Belongs to the paxM FAD-dependent monooxygenase family.

It is found in the membrane. The catalysed reaction is cyclo(N(8)-(alpha,alpha-dimethylallyl)-L-Trp-6a-(alpha,alpha-dimethylallyl)-L-Trp) + AH2 + O2 = okaramine C + A + H2O. Its pathway is alkaloid biosynthesis. Functionally, FAD-dependent monooxygenase; part of the gene cluster that mediates the biosynthesis of okaramine B, a prenylated indole alkaloid that possesses an unusual octacyclic ring system, including a four-membered azetidine ring and an eight-membered azocine ring, and that exhibits insecticidal activity against silkworm larvae. Within the pathway, okaC performs indole 2,3-epoxidation, facilitating the formation of the hexahydropyrrolo[2,3-b]indole (HPI) moiety of okaramine C. okaC then performs asymmetric reverse prenylation of cyclo(L-Trp-L-Trp) at N-1 and C-2' of the indole ring to produce the cyclic prenylated tryptophan dimer cyclo(N8-(alpha,alpha-dimethylallyl)-L-Trp-6a-(alpha,alpha-dime-thylallyl)-L-Trp). The biosynthesis begins with the NRPS okaA that condenses two tryptophan molecules into cyclo(L-Trp-L-Trp). Prenylation by the prenyltransferase okaC then leads to the formation of cyclo(N8-(alpha,alpha-dimethylallyl)-L-Trp-6a-(alpha,alpha-dime-thylallyl)-L-Trp). This is followed by indole 2,3-epoxidation by the FAD-dependent monooxygenase okaB to facilitate the formation of the hexahydropyrrolo[2,3-b]indole (HPI) moiety of okaramine C. The cytochrome P450 monooxygenase okaD then likely catalyzes formation of the eight-membered ring of okaramine A. The dioxygenase okaE further forms the unusual 2-dimethyl-3-methyl-azetidine ring to yield 12-deshydroxyl okaramine E, as well as the hydroxylation of 12-deshydroxyl okaramine E to produce okaramine E. The cytochrome P450 monoxygenase okaG converts 12-deshydroxyl okaramine E into 3-desmethyl okaramine B which is further methylated by the methyltransferase okaF into okaramine B. In a shunt pathway, okaG and okaF together are also able to convert okaramine E into okaramine D. Okaramine H is produced by nonenzymatic conversion from okaramine A. This chain is FAD-dependent monooxygenase okaB, found in Penicillium ochrochloron.